Reading from the N-terminus, the 409-residue chain is MIQGERLWQRLMELGEVGKQPSGGVTRLSFTAEERRAKDLVASYMREAGLFVYEDAAGNLIGRKEGTNPDATVVLVGSHLDSVYNGGCFDGPLGVLAGVEVVQTMNEHGVVTHHPIEVVAFTDEEGARFRFGMIGSRAMAGTLPPEALECRDAEGISLAEAMKQAGLDPDRLPQAARKPGTVKAYVELHIEQGRVLEEAGLPVGIVTGIAGLIWVKFTIAGPAEHAGATPMSLRRDPMAAAAQIIIVIEEEARRTGTTVGTVGQLHVYPGGINVIPERVEFVLDLRDLKAEVRDQVWKAIAVRAETIAKERNVRLTTERLQEMAPVLCSEVVKQAAERACKQLGYPPFWLPSGAAHDGVQLAPICPIGMIFVRSQDGVSHSPAEWSTKEDCAVGAEVLYHTVWQLAQGE.

4 residues coordinate a divalent metal cation: His-79, Asp-90, Glu-125, and His-189. Gln-192, His-225, Asn-273, Arg-286, and Ala-355 together coordinate an N-carbamoyl-L-alpha-amino acid. The involved in dimerization stretch occupies residues 208-325; it reads GIAGLIWVKF…TTERLQEMAP (118 aa). A divalent metal cation is bound at residue His-380.

This sequence belongs to the peptidase M20 family. As to quaternary structure, homodimer. It depends on Mn(2+) as a cofactor. Ni(2+) serves as cofactor. The cofactor is Co(2+). Fe(2+) is required as a cofactor.

The enzyme catalyses an N-carbamoyl-L-alpha-amino acid + H2O + 2 H(+) = an L-alpha-amino acid + NH4(+) + CO2. The catalysed reaction is N-carbamoyl-L-methionine + H2O + 2 H(+) = L-methionine + NH4(+) + CO2. It catalyses the reaction N-acetyl-L-methionine + H2O = L-methionine + acetate. It carries out the reaction N-carbamoyl-L-alanine + H2O + 2 H(+) = L-alanine + NH4(+) + CO2. The enzyme catalyses N-carbamoyl-L-glutamate + H2O + 2 H(+) = L-glutamate + NH4(+) + CO2. The catalysed reaction is N-carbamoylglycine + H2O + 2 H(+) = glycine + NH4(+) + CO2. It catalyses the reaction N-carbamoyl-L-leucine + H2O + 2 H(+) = L-leucine + NH4(+) + CO2. Its function is as follows. Catalyzes the hydrolysis of aliphatic N-carbamoyl-L-alpha-amino acids to free L-alpha-amino acids. Is strictly L-specific since it is inactive toward N-carbamoyl-D-alpha-amino acids. Is not able to use aromatic N-carbamoyl-L-alpha-amino acids like N-carbamoyl-L-tryptophan and N-carbamoyl-L-phenylalanine as substrates, but is also able to hydrolyze N-acetyl-L-methionine. The chain is N-carbamoyl-L-amino acid amidohydrolase from Geobacillus stearothermophilus (Bacillus stearothermophilus).